Here is a 103-residue protein sequence, read N- to C-terminus: SOSS complex subunit C (103 aa).

It belongs to the SOSS-C family. In terms of assembly, belongs to the multiprotein complex Integrator. Component of the SOSS complex, composed of soss-b (soss-b1/nabp2 or soss-b2/nabp1), soss-a/ints3 and soss-c/inip.

The protein localises to the nucleus. In terms of biological role, component of the SOSS complex, a multiprotein complex that functions downstream of the MRN complex to promote DNA repair and G2/M checkpoint. The SOSS complex associates with single-stranded DNA at DNA lesions and influences diverse endpoints in the cellular DNA damage response including cell-cycle checkpoint activation, recombinational repair and maintenance of genomic stability. Required for efficient homologous recombination-dependent repair of double-strand breaks (DSBs). This is SOSS complex subunit C (inip) from Danio rerio (Zebrafish).